We begin with the raw amino-acid sequence, 625 residues long: Alpha-1,3-galactosidase A (625 aa).

The first 32 residues, 1–32 (MAHGCSGGAMSRFVFLGVALALLGGATSPAAA), serve as a signal peptide directing secretion. 5 PbH1 repeats span residues 342 to 364 (KGKV…NIHG), 460 to 482 (TPSV…LVTT), 483 to 505 (RKPV…YVSA), 516 to 537 (VADL…IFVE), and 573 to 611 (VGGF…RIAR).

This sequence belongs to the glycosyl hydrolase 110 family. A subfamily.

The catalysed reaction is Hydrolysis of terminal, non-reducing branched (1-&gt;3)-alpha-D-galactosidic residues, producing free D-galactose.. It carries out the reaction Hydrolysis of terminal, non-reducing alpha-D-galactose residues in alpha-D-galactosides, including galactose oligosaccharides, galactomannans and galactolipids.. In terms of biological role, alpha-galactosidase that specifically removes branched alpha-1,3-linked galactose residues present in blood group B antigens. Has no activity toward linear alpha-1,3-linked galactose residues. The polypeptide is Alpha-1,3-galactosidase A (glaA) (Streptomyces avermitilis (strain ATCC 31267 / DSM 46492 / JCM 5070 / NBRC 14893 / NCIMB 12804 / NRRL 8165 / MA-4680)).